The chain runs to 876 residues: MARSGSCPHLLWDVRKRSLGLEDPSRLRSRYLGRREFIQRLKLEATLNVHDGCVNTICWNDTGEYILSGSDDTKLVISNPYSRKVLTTIRSGHRANIFSAKFLPCTDDKQIVSCSGDGVIFYTNIEQDAETNRQCQFTCHYGTTYEIMTVPNDPYTFLSCGEDGTVRWFDTRIKTSCTKEDCKDDILINCRRAATSVAICPPVPYYLAVGCSDSSVRIYDRRMLGTRATGNYAGRGTTGMVARFIPSHLSNKSCRVTSLCYSEDGQEILVSYSSDYIYLFDPKDDTARELKTPSAEERREELRQPPVKRLRLRGDWSDTGPRARPESERERDGEQSPNVSLMQRMSDMLSRWFEEASEVAQSNRGRGRPRPRGGTNQPDVSTLPTVPSSPNLEVCETAMDVDMPAALLQPSTSSTDPVQAQAATAAIESPRSSSLLSCPDSEPRQSVEASGHHAHHQSDNSNERLSPKPGTGEPVLSLHYSTEGTTTSTIKLNFTDEWSSTASSSRGNGSHCKSEGQEECLVPPSSVQPPEGDSETRAPEELSEKGTLPENLTQNQIDTAQLDNFPAEPLDSNSGEKNNPSQDSPCGLPEEGTLSETDRETCEQASTESATRHASTKPELPSQTEAIEQASTESATRHTSANPELPSQTEAIAPLAHEDPSARDSALQDTDDSDDDPVLIPGARYRTGPGDRRSAVARIQEFFRRRKERKEMEELDTLNIRRPLVKMVYKGHRNSRTMIKEANFWGANFVMSGSDCGHIFIWDRHTAEHLMLLEADNHVVNCLQPHPFDPILASSGIDYDIKIWSPLEESRIFNRKLADEVITRNELMLEETRNTITVPASFMLRMLASLNHIRADRLEGDRSEGSGQENENEDEE.

WD repeat units lie at residues 49 to 88 (VHDG…VLTT), 92 to 133 (GHRA…ETNR), 139 to 179 (CHYG…SCTK), 189 to 229 (NCRR…TRAT), and 251 to 290 (NKSC…AREL). Basic and acidic residues-rich tracts occupy residues 288–303 (RELK…EELR) and 312–334 (LRGD…RDGE). Disordered regions lie at residues 288-340 (RELK…PNVS), 355-391 (EASE…SSPN), 408-485 (LQPS…TEGT), 498-645 (WSST…NPEL), and 658-691 (EDPS…GPGD). Phosphoserine is present on Ser-336. Composition is skewed to polar residues over residues 375-391 (TNQP…SSPN) and 409-422 (QPST…QAQA). Residues 456–466 (HQSDNSNERLS) show a composition bias toward basic and acidic residues. Residues 499–510 (SSTASSSRGNGS) are compositionally biased toward low complexity. A compositionally biased stretch (basic and acidic residues) spans 534 to 544 (SETRAPEELSE). 4 stretches are compositionally biased toward polar residues: residues 550–562 (ENLT…TAQL), 571–584 (DSNS…SQDS), 603–613 (EQASTESATRH), and 621–645 (PSQT…NPEL). At Ser-665 the chain carries Phosphoserine. Thr-670 is modified (phosphothreonine). Ser-673 is modified (phosphoserine). The region spanning 692 to 721 (RRSAVARIQEFFRRRKERKEMEELDTLNIR) is the IQ domain. WD repeat units follow at residues 734-772 (NSRT…HLML) and 775-814 (ADNH…RIFN). A phosphoserine mark is found at Ser-863 and Ser-866.

In terms of assembly, interacts with the nuclear receptors NR3C1 and AR in the presence of ligand. Interacts with DDB1, CUL4A and CUL4B.

The protein localises to the nucleus. It functions in the pathway protein modification; protein ubiquitination. Its function is as follows. Ligand-dependent coactivator of nuclear receptors. Enhance transcriptional activity of the nuclear receptors NR3C1 and AR. May function as a substrate receptor for CUL4-DDB1 E3 ubiquitin-protein ligase complex. This is DDB1- and CUL4-associated factor 6 (Dcaf6) from Mus musculus (Mouse).